The sequence spans 1343 residues: DNA-directed RNA polymerase subunit beta (1343 aa).

The protein belongs to the RNA polymerase beta chain family. As to quaternary structure, the RNAP catalytic core consists of 2 alpha, 1 beta, 1 beta' and 1 omega subunit. When a sigma factor is associated with the core the holoenzyme is formed, which can initiate transcription.

It carries out the reaction RNA(n) + a ribonucleoside 5'-triphosphate = RNA(n+1) + diphosphate. DNA-dependent RNA polymerase catalyzes the transcription of DNA into RNA using the four ribonucleoside triphosphates as substrates. This chain is DNA-directed RNA polymerase subunit beta, found in Shewanella violacea.